The primary structure comprises 36 residues: Turgencin-A (36 aa).

3 cysteine pairs are disulfide-bonded: cysteine 8–cysteine 33, cysteine 12–cysteine 29, and cysteine 17–cysteine 26. A Methionine sulfoxide modification is found at methionine 10. Residue valine 36 is modified to Valine amide.

It is found in the secreted. In terms of biological role, has antimicrobial activity against Gram-positive bacteria (C.glutamicum ATCC 13032 (MIC=0.4 uM), B.subtilis ATCC 23857 (MIC=0.4 uM) and S.aureus ATCC 9144 (MIC=6.3 uM)) and Gram-negative bacteria (E.coli ATCC 25922 (MIC=0.8 uM) and P.aeruginosa ATCC 27853 (MIC=1.6 uM)). The chain is Turgencin-A from Synoicum turgens (Colonial ascidian).